Here is a 769-residue protein sequence, read N- to C-terminus: Gephyrin (769 aa).

The interval 14–153 (QIRVGVLTVS…LPGSKKGSQE (140 aa)) is MPT Mo-transferase. Residues 140–349 (LIINLPGSKK…VDITKVARRH (210 aa)) form an interaction with GABARAP region. 2 disordered regions span residues 181–232 (DELE…DSSS) and 260–299 (TASL…SKGV). The span at 187–199 (PSPPPPLSPPPTT) shows a compositional bias: pro residues. 2 positions are modified to phosphoserine: serine 188 and serine 194. The residue at position 198 (threonine 198) is a Phosphothreonine. Residue serine 200 is modified to Phosphoserine. The S-palmitoyl cysteine moiety is linked to residue cysteine 212. The segment covering 261–286 (ASLSTTPSESPRAQATSRLSTASCPT) has biased composition (polar residues). Serine 262 carries the phosphoserine modification. A phosphothreonine mark is found at threonine 265 and threonine 266. A phosphoserine mark is found at serine 268 and serine 270. Residue cysteine 284 is the site of S-palmitoyl cysteine attachment. An MPT adenylyltransferase region spans residues 327–769 (SSKENILRAS…VVDVMVIGRL (443 aa)). A Phosphoserine modification is found at serine 338.

It in the N-terminal section; belongs to the MoaB/Mog family. This sequence in the C-terminal section; belongs to the MoeA family. Homotrimer, homodimer and homooligomer. Interacts with SRGAP2 (via SH3 domain). Interacts with GLRB. Interacts with GABARAP. Interacts with GABRA3. GABRA3 and GLRB occupy overlapping binding sites. Interacts with ARHGAP32; IQSEC3, INSYN1 and INSYN2A. It depends on Mg(2+) as a cofactor. In terms of processing, palmitoylated. Palmitoylation is stimulated by GABA type A receptors activity. Palmitoylation by ZDHHC12 regulates clustering at synapses.

Its subcellular location is the postsynaptic cell membrane. It localises to the cell membrane. The protein localises to the cytoplasm. The protein resides in the cytosol. It is found in the cytoskeleton. Its subcellular location is the cell projection. It localises to the dendrite. The protein localises to the postsynaptic density. It carries out the reaction molybdopterin + ATP + H(+) = adenylyl-molybdopterin + diphosphate. It catalyses the reaction adenylyl-molybdopterin + molybdate = Mo-molybdopterin + AMP + H(+). The protein operates within cofactor biosynthesis; molybdopterin biosynthesis. With respect to regulation, inhibited by copper and tungsten. Microtubule-associated protein involved in membrane protein-cytoskeleton interactions. It is thought to anchor the inhibitory glycine receptor (GLYR) to subsynaptic microtubules. Acts as a major instructive molecule at inhibitory synapses, where it also clusters GABA type A receptors. Its function is as follows. Also has a catalytic activity and catalyzes two steps in the biosynthesis of the molybdenum cofactor. In the first step, molybdopterin is adenylated. Subsequently, molybdate is inserted into adenylated molybdopterin and AMP is released. This chain is Gephyrin (Gphn), found in Mus musculus (Mouse).